The following is a 231-amino-acid chain: Uracil phosphoribosyltransferase (231 aa).

38 to 42 (KGLVR) lines the GTP pocket. Residues Arg-87, Arg-112, and 140–148 (DPMIATGST) contribute to the 5-phospho-alpha-D-ribose 1-diphosphate site. Residues Ile-203 and 208–210 (GDA) each bind uracil. Asp-209 is a binding site for 5-phospho-alpha-D-ribose 1-diphosphate.

Belongs to the UPRTase family. It depends on Mg(2+) as a cofactor.

The catalysed reaction is UMP + diphosphate = 5-phospho-alpha-D-ribose 1-diphosphate + uracil. It participates in pyrimidine metabolism; UMP biosynthesis via salvage pathway; UMP from uracil: step 1/1. Its activity is regulated as follows. Allosterically activated by GTP. Its function is as follows. Catalyzes the conversion of uracil and 5-phospho-alpha-D-ribose 1-diphosphate (PRPP) to UMP and diphosphate. This is Uracil phosphoribosyltransferase from Methanococcus maripaludis (strain C5 / ATCC BAA-1333).